The primary structure comprises 529 residues: Delayed-rectifier potassium channel regulatory subunit KCNS1 (529 aa).

At 1–217 (MLMLLVRGTH…LTMENPGYSL (217 aa)) the chain is on the cytoplasmic side. A helical transmembrane segment spans residues 218-239 (PSKLFSCVSIGVVLASIAAMCI). Topologically, residues 240–270 (HSLPEYQAREAAAAVATVAAGRSAEDVRDDP) are extracellular. The chain crosses the membrane as a helical span at residues 271 to 293 (VLRRLEYFCIAWFSFEVSSRLLL). The Cytoplasmic segment spans residues 294-304 (APSTRNFFCHP). A helical transmembrane segment spans residues 305–322 (LNLIDIVSVLPFYLTLLA). The Extracellular segment spans residues 323 to 342 (SVALGGNNHGGTSGEELGHL). The chain crosses the membrane as a helical; Voltage-sensor span at residues 343–363 (GKVVQVFRLMRIFRVLKLARH). Over 364–378 (STGLRSLGATLKHSY) the chain is Cytoplasmic. A helical transmembrane segment spans residues 379–400 (REVGILLLYLAVGVSVFSGVAY). Residues 401 to 413 (TAEKEEDVGFDTI) are Extracellular-facing. Residues 414–425 (PACWWWGTVSMT) constitute an intramembrane region (helical). A Selectivity filter motif is present at residues 426-431 (TVGYGD). The stretch at 426-433 (TVGYGDVV) is an intramembrane region. Residues 434-440 (PVTLAGK) lie on the Extracellular side of the membrane. Residues 441–469 (LAASGCILGGILVVALPITIIFNKFSHFY) form a helical membrane-spanning segment. The Cytoplasmic segment spans residues 470 to 529 (QRQKALEAAVRNSGHREFEDLLSSVDGVSDASLETSRETSQEGRSADLEAPSESPKPQIY). A disordered region spans residues 498–529 (SDASLETSRETSQEGRSADLEAPSESPKPQIY). Residues 504-516 (TSRETSQEGRSAD) show a composition bias toward basic and acidic residues.

It belongs to the potassium channel family. S (TC 1.A.1.2) subfamily. Kv9.1/KCNS1 sub-subfamily. Heterotetramer with KCNB1. Heterotetramer with KCNB2. Does not form homomultimers.

Its subcellular location is the cell membrane. Its function is as follows. Potassium channel regulatory subunit that modulate the delayed rectifier voltage-gated potassium channel activity of KCNB1 and KCNB2 by altering their kinetics, expression levels, and shifting the half-inactivation potential to more polarized values. While it does not form functional channels on its own, it can form functional heterotetrameric channels with KCNB1 and KCNB2. Each regulatory subunit has unique regulatory properties that can lead to extensive inhibition, significant changes in kinetics, and/or substantial shifts in the voltage dependencies of the inactivation process. The chain is Delayed-rectifier potassium channel regulatory subunit KCNS1 from Lemur catta (Ring-tailed lemur).